We begin with the raw amino-acid sequence, 537 residues long: Zinc metalloproteinase nas-23 (537 aa).

The N-terminal stretch at 1–16 is a signal peptide; sequence MRFLILVLAGSIGIYG. Residues 17–111 constitute a propeptide that is removed on maturation; sequence VNLPKIPKLS…EQLDHSRTKR (95 aa). Asn77 carries N-linked (GlcNAc...) asparagine glycosylation. The Peptidase M12A domain occupies 116 to 311; that stretch reads NAMYPKTIWL…AKINRHYNCE (196 aa). 6 cysteine pairs are disulfide-bonded: Cys156–Cys310, Cys178–Cys199, Cys314–Cys334, Cys336–Cys345, Cys356–Cys385, and Cys412–Cys433. His207 is a Zn(2+) binding site. Glu208 is an active-site residue. Zn(2+) is bound by residues His211 and His217. Positions 306–346 constitute an EGF-like domain; it reads RHYNCEKNCKNKITCLNGGYQHPKNCKICVCPPGYGGSDCK. Residues 356-471 form the CUB domain; that stretch reads CTGVLVAGET…VQLRYSTVDG (116 aa). A glycan (N-linked (GlcNAc...) asparagine) is linked at Asn481.

Requires Zn(2+) as cofactor. In terms of tissue distribution, expressed in the hypodermis, rectum and to a lesser extent in pharyngeal muscles and intestine.

It localises to the secreted. Metalloprotease. The sequence is that of Zinc metalloproteinase nas-23 (nas-23) from Caenorhabditis elegans.